The following is a 496-amino-acid chain: NADP-dependent glyceraldehyde-3-phosphate dehydrogenase (496 aa).

Residues Arg116 and 169–170 (NY) each bind substrate. The NADP(+) site is built by Lys192, Thr195, and Asp230. 245 to 249 (GGDTG) is a binding site for NAD(+). The Proton acceptor role is filled by Glu264. 297–299 (RCT) is a substrate binding site. The active-site Nucleophile is the Cys298. Glu391 is an NADP(+) binding site. A Phosphoserine modification is found at Ser404. Substrate is bound at residue Arg451.

This sequence belongs to the aldehyde dehydrogenase family. As to quaternary structure, interacts with 14-3-3 protein when phosphorylated. This interaction is released by divalent cations. Post-translationally, phosphorylated in shoots and non-photosynthetic tissues, but not in leaves.

The protein localises to the cytoplasm. The catalysed reaction is D-glyceraldehyde 3-phosphate + NADP(+) + H2O = (2R)-3-phosphoglycerate + NADPH + 2 H(+). Its activity is regulated as follows. Insensitive to magnesium or calcium when dephosphorylated. When phosphorylated, 3-fold activation by magnesium or calcium, 2-fold activation by potassium, inhibited by ADP and AMP and insensitive to ATP or PPi. Its function is as follows. Important as a means of generating NADPH for biosynthetic reactions. In Triticum aestivum (Wheat), this protein is NADP-dependent glyceraldehyde-3-phosphate dehydrogenase (GAPN).